Here is a 70-residue protein sequence, read N- to C-terminus: UPF0352 protein PSHAa1818 (70 aa).

It belongs to the UPF0352 family.

This chain is UPF0352 protein PSHAa1818, found in Pseudoalteromonas translucida (strain TAC 125).